We begin with the raw amino-acid sequence, 496 residues long: Pre-glycoprotein polyprotein GP complex (496 aa).

The N-myristoyl glycine; by host moiety is linked to residue Gly-2. Over 2 to 17 (GQLISFFQEIPVFLQE) the chain is Extracellular. Residues 18–32 (ALNIALVAVSLIAVI) traverse the membrane as a helical segment. Position 33 (Lys-33) is a topological domain, cytoplasmic. The chain crosses the membrane as a helical span at residues 34–53 (GIINLYKSGLFQFIFFLLLA). Extracellular-facing segments span residues 54–58 (GRSCS) and 59–435 (DGTF…TLVD). Cys-57 provides a ligand contact to Zn(2+). N-linked (GlcNAc...) asparagine; by host glycosylation is found at Asn-83, Asn-95, Asn-137, Asn-166, and Asn-178. Disulfide bonds link Cys-92/Cys-237, Cys-135/Cys-164, Cys-207/Cys-213, Cys-282/Cys-295, Cys-304/Cys-313, and Cys-367/Cys-388. N-linked (GlcNAc...) asparagine; by host glycosylation is found at Asn-368, Asn-376, Asn-393, and Asn-398. Residues 436–456 (ICFWSTVFFTASLFLHLVGIP) form a helical membrane-spanning segment. The Cytoplasmic segment spans residues 457-496 (THRHLKGEACPLPHKLDSFGGCRCGKYPRLRKPTIWHKRH). Residues His-458, His-460, Cys-466, His-470, Cys-478, Cys-480, and His-496 each coordinate Zn(2+).

The protein belongs to the arenaviridae GPC protein family. Homotetramer; disulfide-linked. Interacts with host TFRC. As to quaternary structure, homotetramer. GP2 homotetramers bind through ionic interactions with GP1 homotetramers to form the GP complex together with the stable signal peptide. The GP-C polyprotein interacts with the host protease MBTPS1/SKI-1 resulting in the polyprotein processing. Post-translationally, specific enzymatic cleavages in vivo yield mature proteins. GP-C polyprotein is cleaved in the endoplasmic reticulum by the host protease MBTPS1. Only cleaved glycoprotein is incorporated into virions. In terms of processing, the SSP remains stably associated with the GP complex following cleavage by signal peptidase and plays crucial roles in the trafficking of GP through the secretory pathway. Myristoylation is necessary for GP2-mediated fusion activity.

The protein localises to the virion membrane. The protein resides in the host endoplasmic reticulum membrane. It localises to the host Golgi apparatus membrane. Its subcellular location is the host cell membrane. Functionally, class I viral fusion protein that directs fusion of viral and host endosomal membranes, leading to delivery of the nucleocapsid into the cytoplasm. Membrane fusion is mediated by irreversible conformational changes induced upon acidification in the endosome. Stable signal peptide (SSP): cleaved and functions as a signal peptide. In addition, it is also retained as the third component of the GP complex. The SSP is required for efficient glycoprotein expression, post-translational maturation cleavage of GP1 and GP2, glycoprotein transport to the cell surface plasma membrane, formation of infectious virus particles, and acid pH-dependent glycoprotein-mediated cell fusion. In terms of biological role, interacts with the host receptor. Mediates virus attachment to host TFRC. This attachment induces virion internalization predominantly through clathrin-mediated endocytosis. In Machupo virus (MACV), this protein is Pre-glycoprotein polyprotein GP complex.